We begin with the raw amino-acid sequence, 197 residues long: Secreted RxLR effector protein 48 (197 aa).

Residues 1-27 (MCCVSWNWVLACTFLLIFLSWWNCCND) form the signal peptide. Residues 58–79 (RLLRVNLAANAEVLTHEIEEEK) carry the RxLR-dEER motif.

The protein belongs to the RxLR effector family.

Its subcellular location is the secreted. It localises to the host nucleus. The protein localises to the host cytoplasm. Functionally, secreted effector that completely suppresses the host cell death induced by cell death-inducing proteins. The chain is Secreted RxLR effector protein 48 from Plasmopara viticola (Downy mildew of grapevine).